The sequence spans 191 residues: Small ribosomal subunit protein uS5 (191 aa).

The 64-residue stretch at 20–83 (FADRLVAINR…EQAKRQMIRV (64 aa)) folds into the S5 DRBM domain. The tract at residues 158 to 191 (TSPRMVAQRRGKKVSDILKKDGEPAEAAAEPAEA) is disordered. A compositionally biased stretch (basic and acidic residues) spans 170 to 180 (KVSDILKKDGE). Residues 182–191 (AEAAAEPAEA) show a composition bias toward low complexity.

The protein belongs to the universal ribosomal protein uS5 family. Part of the 30S ribosomal subunit. Contacts proteins S4 and S8.

Its function is as follows. With S4 and S12 plays an important role in translational accuracy. Located at the back of the 30S subunit body where it stabilizes the conformation of the head with respect to the body. This is Small ribosomal subunit protein uS5 from Dinoroseobacter shibae (strain DSM 16493 / NCIMB 14021 / DFL 12).